The sequence spans 145 residues: Small ribosomal subunit protein bS6 (145 aa).

The span at 113 to 132 (ENMKKNERKAPKEPVKKDEE) shows a compositional bias: basic and acidic residues. Positions 113–145 (ENMKKNERKAPKEPVKKDEEENKESEEEITSEE) are disordered. The segment covering 133–145 (ENKESEEEITSEE) has biased composition (acidic residues).

The protein belongs to the bacterial ribosomal protein bS6 family.

Its function is as follows. Binds together with bS18 to 16S ribosomal RNA. This is Small ribosomal subunit protein bS6 from Campylobacter hominis (strain ATCC BAA-381 / DSM 21671 / CCUG 45161 / LMG 19568 / NCTC 13146 / CH001A).